The chain runs to 305 residues: Homoserine kinase (305 aa).

93 to 103 provides a ligand contact to ATP; it reads PLARGLGSSAT.

The protein belongs to the GHMP kinase family. Homoserine kinase subfamily.

The protein resides in the cytoplasm. The catalysed reaction is L-homoserine + ATP = O-phospho-L-homoserine + ADP + H(+). The protein operates within amino-acid biosynthesis; L-threonine biosynthesis; L-threonine from L-aspartate: step 4/5. In terms of biological role, catalyzes the ATP-dependent phosphorylation of L-homoserine to L-homoserine phosphate. The chain is Homoserine kinase from Trichodesmium erythraeum (strain IMS101).